The following is a 501-amino-acid chain: Cytochrome P450 monooxygenase ccsG (501 aa).

Positions 1–28 (MMITLFTLAVVSIGFFLWWLLTVQPAVT) are cleaved as a signal peptide. N-linked (GlcNAc...) asparagine glycans are attached at residues N115 and N154. C443 contributes to the heme binding site.

It belongs to the cytochrome P450 family. The cofactor is heme.

It participates in mycotoxin biosynthesis. Functionally, cytochrome P450 monooxygenase; part of the gene cluster that mediates the biosynthesis of a family of the mycotoxins cytochalasins E and K. The hybrid PKS-NRPS synthetase ccsA and the enoyl reductase ccsC are responsible for fusion of phenylalanine with an octaketide backbone and subsequent release of the stable tetramic acid precursor. The polyketide synthase module (PKS) of the PKS-NRPS ccsA is responsible for the synthesis of the octaketide backbone. The downstream nonribosomal peptide synthetase (NRPS) amidates the carboxyl end of the octaketide with a phenylalanine. A reductase-like domain (R) at the C-terminus catalyzes the reductive release of the polyketide-amino acid intermediate. Because ccsA lacks a designated enoylreductase (ER) domain, the required activity is provided the enoyl reductase ccsC. Upon formation of the 11-membered carbocycle-fused perhydroisoindolone intermediate, a number of oxidative steps are required to afford the final cytochalasin E and K, including two hydroxylations at C17 and C18, one alcohol oxidation at C17, one epoxidation at C6 and C7 and two Baeyer-Villiger oxidations. The oxidative modification at C17, C18 and the C6-C7 epoxidation are likely to be catalyzed by the two cytochrome P450 oxygenases ccsD and ccsG. CcsD may be responsible for the epoxidation of the C6-C7 double bond. CcsG may be responsible for the successive oxidative modifications at C17 and C18. The double Baeyer-Villiger oxidations of ketocytochalasin to precytochalasin and cytochalasin Z(16) are among the final steps leading to cytochalasin E and K and are catalyzed by ccsB. The first oxygen insertion step follows that of the classic BVMO mechanism, generating the ester precytochalasin. Release of precytochalasin into an aqueous environment can generate the shunt product iso-precytochalasin through spontaneous isomerization. Alternatively, precytochalasin can undergo further oxidation by ccsB to yield the in-line carbonate-containing cytochalasin Z(16). Cytochalasin Z(16) is a precursor to cytochalasin E and cytochalasin K, whereas iso-precytochalasin is a precursor to cytochalasin Z(17) and rosellichalasin. The hydrolyase ccsE may catalyze hydrolysis of epoxide bond in cytochalasin E to afford cytochalasin K. The function of ccsF has not been assigned but it may play a role in post-PKS-NRPS biosynthetic step, resistance or transport of cytochalasins and related PKS-NRPS products. The chain is Cytochrome P450 monooxygenase ccsG from Aspergillus clavatus (strain ATCC 1007 / CBS 513.65 / DSM 816 / NCTC 3887 / NRRL 1 / QM 1276 / 107).